A 526-amino-acid polypeptide reads, in one-letter code: GMP synthase [glutamine-hydrolyzing] (526 aa).

The Glutamine amidotransferase type-1 domain maps to 9–208; sequence RILILDFGSQ…VMDICGCETL (200 aa). Cysteine 86 acts as the Nucleophile in catalysis. Catalysis depends on residues histidine 182 and glutamate 184. The 193-residue stretch at 209–401 folds into the GMPS ATP-PPase domain; sequence WTSSSIIEDA…LGLPYEMLYR (193 aa). An ATP-binding site is contributed by 236–242; that stretch reads SGGVDSS.

Homodimer.

The enzyme catalyses XMP + L-glutamine + ATP + H2O = GMP + L-glutamate + AMP + diphosphate + 2 H(+). Its pathway is purine metabolism; GMP biosynthesis; GMP from XMP (L-Gln route): step 1/1. Functionally, catalyzes the synthesis of GMP from XMP. The sequence is that of GMP synthase [glutamine-hydrolyzing] from Psychromonas ingrahamii (strain DSM 17664 / CCUG 51855 / 37).